The sequence spans 481 residues: Aspartyl/glutamyl-tRNA(Asn/Gln) amidotransferase subunit B (481 aa).

Belongs to the GatB/GatE family. GatB subfamily. In terms of assembly, heterotrimer of A, B and C subunits.

The catalysed reaction is L-glutamyl-tRNA(Gln) + L-glutamine + ATP + H2O = L-glutaminyl-tRNA(Gln) + L-glutamate + ADP + phosphate + H(+). The enzyme catalyses L-aspartyl-tRNA(Asn) + L-glutamine + ATP + H2O = L-asparaginyl-tRNA(Asn) + L-glutamate + ADP + phosphate + 2 H(+). Functionally, allows the formation of correctly charged Asn-tRNA(Asn) or Gln-tRNA(Gln) through the transamidation of misacylated Asp-tRNA(Asn) or Glu-tRNA(Gln) in organisms which lack either or both of asparaginyl-tRNA or glutaminyl-tRNA synthetases. The reaction takes place in the presence of glutamine and ATP through an activated phospho-Asp-tRNA(Asn) or phospho-Glu-tRNA(Gln). In Pseudomonas putida (strain W619), this protein is Aspartyl/glutamyl-tRNA(Asn/Gln) amidotransferase subunit B.